A 319-amino-acid chain; its full sequence is tRNA uridine(34) hydroxylase (319 aa).

One can recognise a Rhodanese domain in the interval 124-218; it reads LDEDTVILDA…YGKNEETKGE (95 aa). C178 serves as the catalytic Cysteine persulfide intermediate.

Belongs to the TrhO family.

The enzyme catalyses uridine(34) in tRNA + AH2 + O2 = 5-hydroxyuridine(34) in tRNA + A + H2O. Catalyzes oxygen-dependent 5-hydroxyuridine (ho5U) modification at position 34 in tRNAs. The chain is tRNA uridine(34) hydroxylase from Listeria monocytogenes serotype 4a (strain HCC23).